A 69-amino-acid chain; its full sequence is DNA gyrase inhibitor YacG (69 aa).

Residues Cys-9, Cys-12, Cys-28, and Cys-32 each coordinate Zn(2+). The segment at 48–69 is disordered; that stretch reads PVSPDAEDELFSGDLEAPHRGH.

Belongs to the DNA gyrase inhibitor YacG family. In terms of assembly, interacts with GyrB. The cofactor is Zn(2+).

Functionally, inhibits all the catalytic activities of DNA gyrase by preventing its interaction with DNA. Acts by binding directly to the C-terminal domain of GyrB, which probably disrupts DNA binding by the gyrase. This Pseudomonas syringae pv. syringae (strain B728a) protein is DNA gyrase inhibitor YacG.